Here is a 211-residue protein sequence, read N- to C-terminus: tRNA (guanine-N(7)-)-methyltransferase (211 aa).

Positions 43, 68, 95, and 117 each coordinate S-adenosyl-L-methionine. The active site involves Asp-117. Substrate is bound by residues Lys-121, Asp-153, and 190–193 (TEYE).

Belongs to the class I-like SAM-binding methyltransferase superfamily. TrmB family.

The catalysed reaction is guanosine(46) in tRNA + S-adenosyl-L-methionine = N(7)-methylguanosine(46) in tRNA + S-adenosyl-L-homocysteine. It participates in tRNA modification; N(7)-methylguanine-tRNA biosynthesis. Its function is as follows. Catalyzes the formation of N(7)-methylguanine at position 46 (m7G46) in tRNA. The sequence is that of tRNA (guanine-N(7)-)-methyltransferase from Staphylococcus saprophyticus subsp. saprophyticus (strain ATCC 15305 / DSM 20229 / NCIMB 8711 / NCTC 7292 / S-41).